Here is a 294-residue protein sequence, read N- to C-terminus: NAD kinase (294 aa).

Residue Asp74 is the Proton acceptor of the active site. NAD(+) is bound by residues Asp74–Gly75, Asn148–Glu149, His159, Arg176, Asp178, Thr189–Ser194, and Gln249.

It belongs to the NAD kinase family. A divalent metal cation serves as cofactor.

Its subcellular location is the cytoplasm. It carries out the reaction NAD(+) + ATP = ADP + NADP(+) + H(+). Its function is as follows. Involved in the regulation of the intracellular balance of NAD and NADP, and is a key enzyme in the biosynthesis of NADP. Catalyzes specifically the phosphorylation on 2'-hydroxyl of the adenosine moiety of NAD to yield NADP. This Vibrio campbellii (strain ATCC BAA-1116) protein is NAD kinase.